Consider the following 334-residue polypeptide: Protein-methionine-sulfoxide reductase catalytic subunit MsrP (334 aa).

Residues 1–44 (MKKIRPLTEADVTAESAFFMQRRQVLKALGISAAALSLPSTAQA) constitute a signal peptide (tat-type signal). Residues Asn88, 91 to 92 (YE), Cys146, Thr181, Asn233, Arg238, and 249 to 251 (GIK) each bind Mo-molybdopterin.

It belongs to the MsrP family. As to quaternary structure, heterodimer of a catalytic subunit (MsrP) and a heme-binding subunit (MsrQ). Mo-molybdopterin serves as cofactor. Post-translationally, predicted to be exported by the Tat system. The position of the signal peptide cleavage has not been experimentally proven.

It is found in the periplasm. It carries out the reaction L-methionyl-[protein] + a quinone + H2O = L-methionyl-(S)-S-oxide-[protein] + a quinol. The catalysed reaction is L-methionyl-[protein] + a quinone + H2O = L-methionyl-(R)-S-oxide-[protein] + a quinol. Part of the MsrPQ system that repairs oxidized periplasmic proteins containing methionine sulfoxide residues (Met-O), using respiratory chain electrons. Thus protects these proteins from oxidative-stress damage caused by reactive species of oxygen and chlorine generated by the host defense mechanisms. MsrPQ is essential for the maintenance of envelope integrity under bleach stress, rescuing a wide series of structurally unrelated periplasmic proteins from methionine oxidation, including the primary periplasmic chaperone SurA and the lipoprotein Pal. The catalytic subunit MsrP is non-stereospecific, being able to reduce both (R-) and (S-) diastereoisomers of methionine sulfoxide. The sequence is that of Protein-methionine-sulfoxide reductase catalytic subunit MsrP from Salmonella newport (strain SL254).